Consider the following 101-residue polypeptide: MQSDKDKTFDSWLVKAIGRVQGVGYRDACIRYARAQDITGWVRNRVDGSVELMLQGSKEQLADMCRWLRDGIPAAHVEKLEVSKVPPPSPRLNRFDRLPNL.

The Acylphosphatase-like domain maps to 11–99 (SWLVKAIGRV…PRLNRFDRLP (89 aa)). Catalysis depends on residues Arg26 and Asn44.

This sequence belongs to the acylphosphatase family.

The catalysed reaction is an acyl phosphate + H2O = a carboxylate + phosphate + H(+). The polypeptide is Acylphosphatase (acyP) (Polaromonas naphthalenivorans (strain CJ2)).